Reading from the N-terminus, the 466-residue chain is Adenosylhomocysteinase (466 aa).

Substrate-binding residues include Thr57, Asp132, and Glu192. Residue 193–195 coordinates NAD(+); it reads TTT. Substrate is bound by residues Lys222 and Asp226. Residues Asn227, 256 to 261, Glu279, Asn314, 335 to 337, and Asn380 contribute to the NAD(+) site; these read GYGDVG and IGH.

The protein belongs to the adenosylhomocysteinase family. NAD(+) serves as cofactor.

It localises to the cytoplasm. The catalysed reaction is S-adenosyl-L-homocysteine + H2O = L-homocysteine + adenosine. It participates in amino-acid biosynthesis; L-homocysteine biosynthesis; L-homocysteine from S-adenosyl-L-homocysteine: step 1/1. May play a key role in the regulation of the intracellular concentration of adenosylhomocysteine. The sequence is that of Adenosylhomocysteinase from Rhizobium leguminosarum bv. trifolii (strain WSM2304).